Here is a 109-residue protein sequence, read N- to C-terminus: Large ribosomal subunit protein P2 (109 aa).

Residues 63 to 109 (ASVPSGGAGGASGGAAAAGGAAEEAKEEEKEEEKEESDEDMGFGLFD) are disordered. The span at 68–79 (GGAGGASGGAAA) shows a compositional bias: gly residues. A compositionally biased stretch (acidic residues) spans 91–103 (EKEEEKEESDEDM). S99 carries the phosphoserine modification.

This sequence belongs to the eukaryotic ribosomal protein P1/P2 family. In terms of assembly, P1 and P2 exist as dimers at the large ribosomal subunit.

Plays an important role in the elongation step of protein synthesis. The polypeptide is Large ribosomal subunit protein P2 (Fusarium culmorum).